A 237-amino-acid polypeptide reads, in one-letter code: Large ribosomal subunit protein uL1 (237 aa).

The protein belongs to the universal ribosomal protein uL1 family. Part of the 50S ribosomal subunit.

In terms of biological role, binds directly to 23S rRNA. The L1 stalk is quite mobile in the ribosome, and is involved in E site tRNA release. Its function is as follows. Protein L1 is also a translational repressor protein, it controls the translation of the L11 operon by binding to its mRNA. The chain is Large ribosomal subunit protein uL1 from Corynebacterium kroppenstedtii (strain DSM 44385 / JCM 11950 / CIP 105744 / CCUG 35717).